A 203-amino-acid polypeptide reads, in one-letter code: dITP/XTP pyrophosphatase (203 aa).

A substrate-binding site is contributed by 16-21 (SHNRGK). Positions 48 and 77 each coordinate Mg(2+). The active-site Proton acceptor is the D77. Substrate is bound by residues S78, 161–164 (FGYD), K184, and 189–190 (HR).

The protein belongs to the HAM1 NTPase family. In terms of assembly, homodimer. Requires Mg(2+) as cofactor.

The catalysed reaction is XTP + H2O = XMP + diphosphate + H(+). It carries out the reaction dITP + H2O = dIMP + diphosphate + H(+). It catalyses the reaction ITP + H2O = IMP + diphosphate + H(+). Functionally, pyrophosphatase that catalyzes the hydrolysis of nucleoside triphosphates to their monophosphate derivatives, with a high preference for the non-canonical purine nucleotides XTP (xanthosine triphosphate), dITP (deoxyinosine triphosphate) and ITP. Seems to function as a house-cleaning enzyme that removes non-canonical purine nucleotides from the nucleotide pool, thus preventing their incorporation into DNA/RNA and avoiding chromosomal lesions. This Rhodospirillum centenum (strain ATCC 51521 / SW) protein is dITP/XTP pyrophosphatase.